The primary structure comprises 86 residues: Exodeoxyribonuclease 7 small subunit (86 aa).

Belongs to the XseB family. Heterooligomer composed of large and small subunits.

Its subcellular location is the cytoplasm. It carries out the reaction Exonucleolytic cleavage in either 5'- to 3'- or 3'- to 5'-direction to yield nucleoside 5'-phosphates.. Functionally, bidirectionally degrades single-stranded DNA into large acid-insoluble oligonucleotides, which are then degraded further into small acid-soluble oligonucleotides. The protein is Exodeoxyribonuclease 7 small subunit of Bacillus licheniformis (strain ATCC 14580 / DSM 13 / JCM 2505 / CCUG 7422 / NBRC 12200 / NCIMB 9375 / NCTC 10341 / NRRL NRS-1264 / Gibson 46).